A 197-amino-acid chain; its full sequence is Nascent polypeptide-associated complex subunit alpha (197 aa).

Residues 1–18 (MTGSTETRHNEKDVKEPQ) show a composition bias toward basic and acidic residues. The interval 1–30 (MTGSTETRHNEKDVKEPQVDSDADSDNEAI) is disordered. Positions 19–28 (VDSDADSDNE) are enriched in acidic residues. The NAC-A/B domain maps to 58–123 (SRSEKKARKL…AKIEDLTQHA (66 aa)). Positions 134 to 155 (TREAPQLKTVEEDDNEDVEEDS) are disordered. Residues 144–155 (EEDDNEDVEEDS) show a composition bias toward acidic residues. The 38-residue stretch at 158–195 (IEEKDIELVISQANTTRNKAIRALKDADNDIVNAIMSL) folds into the UBA domain.

The protein belongs to the NAC-alpha family.

May promote appropriate targeting of ribosome-nascent polypeptide complexes. In Caenorhabditis briggsae, this protein is Nascent polypeptide-associated complex subunit alpha.